The following is a 592-amino-acid chain: A-type ATP synthase subunit A (592 aa).

An ATP-binding site is contributed by 234–241; sequence GPFGSGKT.

This sequence belongs to the ATPase alpha/beta chains family. As to quaternary structure, has multiple subunits with at least A(3), B(3), C, D, E, F, H, I and proteolipid K(x).

The protein localises to the cell membrane. It catalyses the reaction ATP + H2O + 4 H(+)(in) = ADP + phosphate + 5 H(+)(out). Functionally, produces ATP from ADP in the presence of a proton gradient across the membrane. The archaeal alpha chain is a catalytic subunit. Component of the A-type ATP synthase that produces ATP from ADP in the presence of a proton gradient across the membrane. The A chain is the catalytic subunit. In Sulfolobus acidocaldarius (strain ATCC 33909 / DSM 639 / JCM 8929 / NBRC 15157 / NCIMB 11770), this protein is A-type ATP synthase subunit A.